The following is a 407-amino-acid chain: Protein arginine N-methyltransferase 2 (407 aa).

Positions 186–407 (TAADQATYLK…YYYHPEIRFA (222 aa)) constitute an RMT2 domain. S-adenosyl-L-methionine-binding positions include Tyr193, Met223, 246-251 (FGMGII), 267-269 (EAH), 294-295 (WQ), and Asp315.

This sequence belongs to the class I-like SAM-binding methyltransferase superfamily. RMT2 methyltransferase family. Monomer.

It localises to the cytoplasm. It is found in the nucleus. In terms of biological role, S-adenosyl-L-methionine-dependent protein-arginine N-methyltransferase that methylates the delta-nitrogen atom of arginine residues to form N5-methylarginine (type IV) in target proteins. Monomethylates ribosomal protein L12. The sequence is that of Protein arginine N-methyltransferase 2 from Kluyveromyces lactis (strain ATCC 8585 / CBS 2359 / DSM 70799 / NBRC 1267 / NRRL Y-1140 / WM37) (Yeast).